Reading from the N-terminus, the 283-residue chain is MRTQWPSPAKLNLFLYITGQRADGYHTLQTLFQFLDYGDTISIELRDDGDIRLLTPVEGVEHEDNLIVRAARLLMKTAADSGRLPTGSGADISIDKRLPMGGGLGGGSSNAATVLVALNHLWQCGLSMDELAEMGLTLGADVPVFVRGHAAFAEGVGEILTPVDPPEKWYLVAHPGVSIPTPVIFKDPELPRNTPKRSIETLLKCEFSNDCEVIARKRFREVDAVLSWLLEYAPSRLTGTGACVFAEFDTESEARQVLEQAPEWLNGFVAKGVNLSPLHRAML.

Residue lysine 10 is part of the active site. 99–109 contacts ATP; it reads PMGGGLGGGSS. Aspartate 141 is a catalytic residue.

Belongs to the GHMP kinase family. IspE subfamily. In terms of assembly, homodimer.

It catalyses the reaction 4-CDP-2-C-methyl-D-erythritol + ATP = 4-CDP-2-C-methyl-D-erythritol 2-phosphate + ADP + H(+). It participates in isoprenoid biosynthesis; isopentenyl diphosphate biosynthesis via DXP pathway; isopentenyl diphosphate from 1-deoxy-D-xylulose 5-phosphate: step 3/6. Catalyzes the phosphorylation of the position 2 hydroxy group of 4-diphosphocytidyl-2C-methyl-D-erythritol. The sequence is that of 4-diphosphocytidyl-2-C-methyl-D-erythritol kinase from Escherichia coli O9:H4 (strain HS).